Consider the following 209-residue polypeptide: Thymidylate kinase (209 aa).

10–17 serves as a coordination point for ATP; it reads GLDGAGKS.

This sequence belongs to the thymidylate kinase family.

The enzyme catalyses dTMP + ATP = dTDP + ADP. Its function is as follows. Phosphorylation of dTMP to form dTDP in both de novo and salvage pathways of dTTP synthesis. The sequence is that of Thymidylate kinase from Francisella tularensis subsp. holarctica (strain OSU18).